The chain runs to 236 residues: Probable pseudouridine-5'-phosphatase YKL033W-A (236 aa).

The protein belongs to the HAD-like hydrolase superfamily.

It carries out the reaction XMP + H2O = xanthosine + phosphate. The catalysed reaction is psi-UMP + H2O = pseudouridine + phosphate. Nucleotidase with XMP as the best in vitro substrate. Low catalytic efficiencies of YKL033W-A observed with XMP and other substrates suggest that these could be secondary activities for this protein, and its primary substrate is not yet identified. May possess pseudouridine 5'-phosphatase activity and together with dTTP/UTP pyrophosphatase YOR111W might constitute a pathway for the detoxification of pseudouridine 5'-triphosphate (Psi-UTP) and -monophosphate (Psi-UMP). In Saccharomyces cerevisiae (strain ATCC 204508 / S288c) (Baker's yeast), this protein is Probable pseudouridine-5'-phosphatase YKL033W-A.